Reading from the N-terminus, the 252-residue chain is Triosephosphate isomerase (252 aa).

Substrate is bound at residue 10-12 (NWK). H96 serves as the catalytic Electrophile. The Proton acceptor role is filled by E168. Residues G174, S214, and 235 to 236 (GG) each bind substrate.

The protein belongs to the triosephosphate isomerase family. As to quaternary structure, homodimer.

It localises to the cytoplasm. It catalyses the reaction D-glyceraldehyde 3-phosphate = dihydroxyacetone phosphate. It participates in carbohydrate biosynthesis; gluconeogenesis. The protein operates within carbohydrate degradation; glycolysis; D-glyceraldehyde 3-phosphate from glycerone phosphate: step 1/1. Involved in the gluconeogenesis. Catalyzes stereospecifically the conversion of dihydroxyacetone phosphate (DHAP) to D-glyceraldehyde-3-phosphate (G3P). The protein is Triosephosphate isomerase of Lactobacillus delbrueckii subsp. bulgaricus (strain ATCC 11842 / DSM 20081 / BCRC 10696 / JCM 1002 / NBRC 13953 / NCIMB 11778 / NCTC 12712 / WDCM 00102 / Lb 14).